Consider the following 407-residue polypeptide: Phosphopentomutase (407 aa).

Mn(2+) contacts are provided by Asp-10, Asp-306, His-311, Asp-347, His-348, and His-359.

This sequence belongs to the phosphopentomutase family. Mn(2+) serves as cofactor.

The protein resides in the cytoplasm. It catalyses the reaction 2-deoxy-alpha-D-ribose 1-phosphate = 2-deoxy-D-ribose 5-phosphate. It carries out the reaction alpha-D-ribose 1-phosphate = D-ribose 5-phosphate. It participates in carbohydrate degradation; 2-deoxy-D-ribose 1-phosphate degradation; D-glyceraldehyde 3-phosphate and acetaldehyde from 2-deoxy-alpha-D-ribose 1-phosphate: step 1/2. Isomerase that catalyzes the conversion of deoxy-ribose 1-phosphate (dRib-1-P) and ribose 1-phosphate (Rib-1-P) to deoxy-ribose 5-phosphate (dRib-5-P) and ribose 5-phosphate (Rib-5-P), respectively. In Escherichia coli (strain UTI89 / UPEC), this protein is Phosphopentomutase.